The following is a 245-amino-acid chain: 1-(5-phosphoribosyl)-5-[(5-phosphoribosylamino)methylideneamino] imidazole-4-carboxamide isomerase (245 aa).

Aspartate 7 (proton acceptor) is an active-site residue. The active-site Proton donor is the aspartate 129.

This sequence belongs to the HisA/HisF family.

Its subcellular location is the cytoplasm. The enzyme catalyses 1-(5-phospho-beta-D-ribosyl)-5-[(5-phospho-beta-D-ribosylamino)methylideneamino]imidazole-4-carboxamide = 5-[(5-phospho-1-deoxy-D-ribulos-1-ylimino)methylamino]-1-(5-phospho-beta-D-ribosyl)imidazole-4-carboxamide. It functions in the pathway amino-acid biosynthesis; L-histidine biosynthesis; L-histidine from 5-phospho-alpha-D-ribose 1-diphosphate: step 4/9. The polypeptide is 1-(5-phosphoribosyl)-5-[(5-phosphoribosylamino)methylideneamino] imidazole-4-carboxamide isomerase (Salmonella arizonae (strain ATCC BAA-731 / CDC346-86 / RSK2980)).